A 1771-amino-acid chain; its full sequence is Atrochrysone carboxylic acid synthase (1771 aa).

The tract at residues 38-269 (HLHSKDRRHH…SLPVFGGLCH (232 aa)) is N-terminal acylcarrier protein transacylase domain (SAT). The region spanning 402-836 (QSKIAIVGMS…GGNTSVVLEE (435 aa)) is the Ketosynthase family 3 (KS3) domain. Active-site for beta-ketoacyl synthase activity residues include Cys-575, His-711, and His-754. A malonyl-CoA:ACP transacylase (MAT) domain region spans residues 937 to 1257 (FAFTGQGASY…LSSLHCAGVE (321 aa)). A product template (PT) domain region spans residues 1322–1641 (TSTVQKIVEE…RLLLNRFFSP (320 aa)). Residues 1326–1461 (QKIVEESFDG…AKIYYCDASE (136 aa)) are N-terminal hotdog fold. The region spanning 1326-1636 (QKIVEESFDG…FRRYPRLLLN (311 aa)) is the PKS/mFAS DH domain. The Proton acceptor; for dehydratase activity role is filled by His-1358. The tract at residues 1488–1636 (IANRFSGRMA…FRRYPRLLLN (149 aa)) is C-terminal hotdog fold. Residue Asp-1547 is the Proton donor; for dehydratase activity of the active site. A compositionally biased stretch (low complexity) spans 1668 to 1681 (AATSTTSTTSTAST). The interval 1668–1695 (AATSTTSTTSTASTGQPPKVDETSPVDS) is disordered. Residues 1693 to 1770 (VDSNSTAARA…DLKSWLLEYY (78 aa)) form the Carrier domain. An O-(pantetheine 4'-phosphoryl)serine modification is found at Ser-1730.

The catalysed reaction is holo-[ACP] + 8 malonyl-CoA + 8 H(+) = atrochrysone carboxyl-[ACP] + 8 CO2 + 8 CoA + 2 H2O. It functions in the pathway secondary metabolite biosynthesis. In terms of biological role, non-reducing polyketide synthase; part of the gene cluster that mediates the biosynthesis of geodin, an intermediate in the biosynthesis of other natural products. The pathway begins with the synthesis of atrochrysone thioester by the polyketide synthase (PKS) gedC. The atrochrysone carboxyl ACP thioesterase gedB then breaks the thioester bond and releases the atrochrysone carboxylic acid from gedC. The atrochrysone carboxylic acid is then converted to atrochrysone which is further transformed into emodinanthrone. The next step is performed by the emodinanthrone oxygenase gedH that catalyzes the oxidation of emodinanthrone to emodin. Emodin O-methyltransferase encoded probably by gedA then catalyzes methylation of the 8-hydroxy group of emodin to form questin. Ring cleavage of questin by questin oxidase gedK leads to desmethylsulochrin via several intermediates including questin epoxide. Another methylation step probably catalyzed by methyltransferase gedG leads to the formation of sulochrin which is further converted to dihydrogeodin by the sulochrin halogenase gedL. Finally, the dihydrogeodin oxidase gedJ catalyzes the stereospecific phenol oxidative coupling reaction converting dihydrogeodin to geodin. The polypeptide is Atrochrysone carboxylic acid synthase (Aspergillus terreus (strain NIH 2624 / FGSC A1156)).